The following is a 197-amino-acid chain: Elongation factor Ts (197 aa).

The segment at 81–84 is involved in Mg(2+) ion dislocation from EF-Tu; it reads TDFV.

This sequence belongs to the EF-Ts family.

The protein resides in the cytoplasm. Associates with the EF-Tu.GDP complex and induces the exchange of GDP to GTP. It remains bound to the aminoacyl-tRNA.EF-Tu.GTP complex up to the GTP hydrolysis stage on the ribosome. The polypeptide is Elongation factor Ts (Thermotoga neapolitana (strain ATCC 49049 / DSM 4359 / NBRC 107923 / NS-E)).